The primary structure comprises 609 residues: 2',5'-phosphodiesterase 12 (609 aa).

A mitochondrion-targeting transit peptide spans 1 to 42; sequence MWRLPGARAALRVIRTAVEKLSRAEAGSQTAAGAMERAVVRC. Positions 89 to 99 are enriched in basic residues; it reads AAAAKKSRKSR. Disordered regions lie at residues 89–111 and 206–230; these read AAAAKKSRKSRPNASGGAACSGP and AEPEVGVPSSLSPSSPSSSWTETDV. 2 stretches are compositionally biased toward low complexity: residues 100–111 and 213–224; these read PNASGGAACSGP and PSSLSPSSPSSS. A Phosphoserine modification is found at Ser217. Residues Glu351, Asp496, and Asn498 each coordinate Mg(2+). The Proton donor/acceptor role is filled by Asp496.

The protein belongs to the CCR4/nocturin family. The cofactor is Mg(2+). As to expression, ubiquitous.

It localises to the mitochondrion matrix. The enzyme catalyses Exonucleolytic cleavage of poly(A) to 5'-AMP.. Enzyme that cleaves 2',5'-phosphodiester bond linking adenosines of the 5'-triphosphorylated oligoadenylates, triphosphorylated oligoadenylates referred as 2-5A modulates the 2-5A system. Degrades triphosphorylated 2-5A to produce AMP and ATP. Also cleaves 3',5'-phosphodiester bond of oligoadenylates. Plays a role as a negative regulator of the 2-5A system that is one of the major pathways for antiviral and antitumor functions induced by interferons (IFNs). Suppression of this enzyme increases cellular 2-5A levels and decreases viral replication in cultured small-airway epithelial cells and Hela cells. The sequence is that of 2',5'-phosphodiesterase 12 (PDE12) from Homo sapiens (Human).